A 279-amino-acid polypeptide reads, in one-letter code: Dermonecrotic toxin LspiSicTox-betaIE3ii (279 aa).

Residue His-5 is part of the active site. The Mg(2+) site is built by Glu-25 and Asp-27. The Nucleophile role is filled by His-41. 2 disulfides stabilise this stretch: Cys-45-Cys-51 and Cys-47-Cys-190. A Mg(2+)-binding site is contributed by Asp-85.

It belongs to the arthropod phospholipase D family. Class II subfamily. The cofactor is Mg(2+). Expressed by the venom gland.

It is found in the secreted. The catalysed reaction is an N-(acyl)-sphingosylphosphocholine = an N-(acyl)-sphingosyl-1,3-cyclic phosphate + choline. The enzyme catalyses an N-(acyl)-sphingosylphosphoethanolamine = an N-(acyl)-sphingosyl-1,3-cyclic phosphate + ethanolamine. It carries out the reaction a 1-acyl-sn-glycero-3-phosphocholine = a 1-acyl-sn-glycero-2,3-cyclic phosphate + choline. It catalyses the reaction a 1-acyl-sn-glycero-3-phosphoethanolamine = a 1-acyl-sn-glycero-2,3-cyclic phosphate + ethanolamine. Its function is as follows. Dermonecrotic toxins cleave the phosphodiester linkage between the phosphate and headgroup of certain phospholipids (sphingolipid and lysolipid substrates), forming an alcohol (often choline) and a cyclic phosphate. This toxin acts on sphingomyelin (SM). It may also act on ceramide phosphoethanolamine (CPE), lysophosphatidylcholine (LPC) and lysophosphatidylethanolamine (LPE), but not on lysophosphatidylserine (LPS), and lysophosphatidylglycerol (LPG). It acts by transphosphatidylation, releasing exclusively cyclic phosphate products as second products. Induces dermonecrosis, hemolysis, increased vascular permeability, edema, inflammatory response, and platelet aggregation. The chain is Dermonecrotic toxin LspiSicTox-betaIE3ii from Loxosceles spinulosa (Recluse spider).